Reading from the N-terminus, the 379-residue chain is Sulfate adenylyltransferase (379 aa).

It belongs to the sulfate adenylyltransferase family.

The catalysed reaction is sulfate + ATP + H(+) = adenosine 5'-phosphosulfate + diphosphate. Its pathway is sulfur metabolism; hydrogen sulfide biosynthesis; sulfite from sulfate: step 1/3. In Pyrococcus abyssi (strain GE5 / Orsay), this protein is Sulfate adenylyltransferase (sat).